The primary structure comprises 370 residues: Ni-sirohydrochlorin a,c-diamide reductive cyclase complex, component CfbD (370 aa).

It belongs to the NifD/NifK/NifE/NifN family. As to quaternary structure, homodimer or monomer. The Ni-sirohydrochlorin a,c-diamide reductive cyclase complex is composed of a NifH homolog component CfbC and a NifD homolog component CfbD. [4Fe-4S] cluster serves as cofactor.

The catalysed reaction is Ni-sirohydrochlorin a,c-diamide + 3 AH2 + ATP + H2O = 15,17(3)-seco-F430-17(3)-acid + 3 A + ADP + phosphate. In terms of biological role, involved in the biosynthesis of the unique nickel-containing tetrapyrrole coenzyme F430, the prosthetic group of methyl-coenzyme M reductase (MCR), which plays a key role in methanogenesis and anaerobic methane oxidation. Catalyzes both the six-electron reduction of the tetrahydroporphyrin ring system and the gamma-lactamization of the c-acetamide side chain of Ni-sirohydrochlorin a,c-diamide to yield 15,17(3)-seco-F430-17(3)-acid (seco-F430), the last intermediate in the biosynthesis of the coenzyme F430. This chain is Ni-sirohydrochlorin a,c-diamide reductive cyclase complex, component CfbD, found in Methanosarcina acetivorans (strain ATCC 35395 / DSM 2834 / JCM 12185 / C2A).